The following is a 169-amino-acid chain: Allophycocyanin subunit beta-18 (169 aa).

Position 72 is an N4-methylasparagine (N72). C82 is a (2R,3E)-phycocyanobilin binding site.

It belongs to the phycobiliprotein family. In terms of assembly, heterodimer of ApcE and this beta chain. Post-translationally, contains one covalently linked bilin chromophore. The chromophore is added by phycocyanobilin lyase CpcUS.

Its subcellular location is the cellular thylakoid membrane. A variant beta-allophycocyanin (AP) which forms a complex with ApcE, a phycobilisome terminal emitter that influences energy transfer to photosystem II. The polypeptide is Allophycocyanin subunit beta-18 (apcF) (Picosynechococcus sp. (strain ATCC 27264 / PCC 7002 / PR-6) (Agmenellum quadruplicatum)).